A 273-amino-acid chain; its full sequence is Putative pyruvate, phosphate dikinase regulatory protein (273 aa).

Position 149–156 (Gly-149–Thr-156) interacts with ADP.

The protein belongs to the pyruvate, phosphate/water dikinase regulatory protein family. PDRP subfamily.

The catalysed reaction is N(tele)-phospho-L-histidyl/L-threonyl-[pyruvate, phosphate dikinase] + ADP = N(tele)-phospho-L-histidyl/O-phospho-L-threonyl-[pyruvate, phosphate dikinase] + AMP + H(+). It catalyses the reaction N(tele)-phospho-L-histidyl/O-phospho-L-threonyl-[pyruvate, phosphate dikinase] + phosphate + H(+) = N(tele)-phospho-L-histidyl/L-threonyl-[pyruvate, phosphate dikinase] + diphosphate. Its function is as follows. Bifunctional serine/threonine kinase and phosphorylase involved in the regulation of the pyruvate, phosphate dikinase (PPDK) by catalyzing its phosphorylation/dephosphorylation. The chain is Putative pyruvate, phosphate dikinase regulatory protein from Rickettsia rickettsii (strain Iowa).